Reading from the N-terminus, the 414-residue chain is Isocitrate dehydrogenase [NADP] cytoplasmic (414 aa).

Serine 2 carries the N-acetylserine modification. Tyrosine 42 bears the Phosphotyrosine mark. 75-77 (TIT) serves as a coordination point for NADP(+). Threonine 77 lines the substrate pocket. N6-acetyllysine is present on lysine 81. Arginine 82 is an NADP(+) binding site. Residues 94-100 (SPNGTIR) and arginine 109 each bind substrate. An N6-succinyllysine modification is found at lysine 126. Substrate is bound by residues arginine 132 and lysine 212. An N6-acetyllysine mark is found at lysine 224, lysine 233, and lysine 243. Position 252 (aspartate 252) interacts with Mn(2+). An NADP(+)-binding site is contributed by lysine 260. Positions 275 and 279 each coordinate Mn(2+). Residue 310–315 (GTVTRH) participates in NADP(+) binding. An N6-acetyllysine modification is found at lysine 321. Asparagine 328 serves as a coordination point for NADP(+). Serine 389 bears the Phosphoserine mark. Residue lysine 400 is modified to N6-succinyllysine.

This sequence belongs to the isocitrate and isopropylmalate dehydrogenases family. In terms of assembly, homodimer. Mg(2+) serves as cofactor. Mn(2+) is required as a cofactor. Acetylation at Lys-374 dramatically reduces catalytic activity.

The protein localises to the cytoplasm. Its subcellular location is the cytosol. It catalyses the reaction D-threo-isocitrate + NADP(+) = 2-oxoglutarate + CO2 + NADPH. Catalyzes the NADP(+)-dependent oxidative decarboxylation of isocitrate (D-threo-isocitrate) to 2-ketoglutarate (2-oxoglutarate), which is required by other enzymes such as the phytanoyl-CoA dioxygenase. Plays a critical role in the generation of NADPH, an important cofactor in many biosynthesis pathways. May act as a corneal epithelial crystallin and may be involved in maintaining corneal epithelial transparency. This is Isocitrate dehydrogenase [NADP] cytoplasmic (IDH1) from Microtus ochrogaster (Prairie vole).